Here is a 67-residue protein sequence, read N- to C-terminus: Large ribosomal subunit protein uL29 (67 aa).

Belongs to the universal ribosomal protein uL29 family.

The sequence is that of Large ribosomal subunit protein uL29 from Zymomonas mobilis subsp. mobilis (strain ATCC 31821 / ZM4 / CP4).